Reading from the N-terminus, the 248-residue chain is Coproheme decarboxylase (248 aa).

Residues R130, Y144, Y144–K148, K148, H171, Q184, and S222 each bind Fe-coproporphyrin III. Y144 is a catalytic residue.

Belongs to the ChdC family. Type 1 subfamily. As to quaternary structure, homopentamer. Fe-coproporphyrin III serves as cofactor.

It carries out the reaction Fe-coproporphyrin III + 2 H2O2 + 2 H(+) = heme b + 2 CO2 + 4 H2O. The catalysed reaction is Fe-coproporphyrin III + H2O2 + H(+) = harderoheme III + CO2 + 2 H2O. The enzyme catalyses harderoheme III + H2O2 + H(+) = heme b + CO2 + 2 H2O. It participates in porphyrin-containing compound metabolism; protoheme biosynthesis. Involved in coproporphyrin-dependent heme b biosynthesis. Catalyzes the decarboxylation of Fe-coproporphyrin III (coproheme) to heme b (protoheme IX), the last step of the pathway. The reaction occurs in a stepwise manner with a three-propionate harderoheme intermediate. This is Coproheme decarboxylase from Geobacillus stearothermophilus (strain DSM 13240 / CIP 106956 / 10).